The sequence spans 507 residues: 3-oxosteroid 1-dehydrogenase (507 aa).

9-38 (DLLVVGSGGGALTGAYTAAAQGLTTIVLEK) is an FAD binding site. Residues 299 to 385 (GLVVDSPGSV…LPRPDYRPER (87 aa)) are disordered.

Belongs to the FAD-dependent oxidoreductase 2 family. 3-oxosteroid dehydrogenase subfamily. The cofactor is FAD.

The protein resides in the cell membrane. The catalysed reaction is a 3-oxosteroid + A = a 3-oxo-Delta(1)-steroid + AH2. It participates in lipid metabolism; steroid degradation. Its function is as follows. Catalyzes the elimination of the C-1 and C-2 hydrogen atoms of the A-ring from the polycyclic ring structure of 3-ketosteroids. This is 3-oxosteroid 1-dehydrogenase from Rhodococcus opacus (Nocardia opaca).